We begin with the raw amino-acid sequence, 439 residues long: Ornithine aminotransferase, mitochondrial (439 aa).

Residues 1-35 (MLSKLASLQTVAALRRGLRTSVASATSVATKKTEQ) constitute a mitochondrion transit peptide. Lys49 and Lys66 each carry N6-acetyllysine. Lys102 is subject to N6-succinyllysine. Lys107 carries the N6-acetyllysine; alternate modification. At Lys107 the chain carries N6-succinyllysine; alternate. Lys292 is modified (N6-(pyridoxal phosphate)lysine). Position 362 is an N6-acetyllysine; alternate (Lys362). The residue at position 362 (Lys362) is an N6-succinyllysine; alternate. N6-acetyllysine is present on residues Lys386 and Lys392. At Lys405 the chain carries N6-acetyllysine; alternate. Lys405 is subject to N6-succinyllysine; alternate. Lys421 carries the N6-acetyllysine modification.

As to quaternary structure, homohexamer. Pyridoxal 5'-phosphate is required as a cofactor. In terms of tissue distribution, expressed in the head and flagellum of epididymal sperm but not in testicular sperm (at protein level).

Its subcellular location is the mitochondrion matrix. It catalyses the reaction L-ornithine + 2-oxoglutarate = L-glutamate 5-semialdehyde + L-glutamate. It participates in amino-acid biosynthesis; L-proline biosynthesis; L-glutamate 5-semialdehyde from L-ornithine: step 1/1. Catalyzes the reversible interconversion of L-ornithine and 2-oxoglutarate to L-glutamate semialdehyde and L-glutamate. This chain is Ornithine aminotransferase, mitochondrial (Oat), found in Rattus norvegicus (Rat).